The chain runs to 406 residues: Kelch domain-containing protein 1 (406 aa).

Kelch repeat units follow at residues 24–76 (FLYV…CGAC), 80–134 (KLYI…VYKD), 135–181 (RLIY…TKTQ), 208–258 (KGYI…PIAD), 260–307 (KLFL…ACLG), and 311–361 (EIMV…LESQ).

Component of a CRL5 E3 ubiquitin-protein ligase complex, also named ECS (Elongin BC-CUL2/5-SOCS-box protein) complex, composed of CUL5, Elongin BC (ELOB and ELOC), RBX1 and substrate-specific adapter KLHDC1. Widely expressed, with high levels in skeletal muscle, pancreas and liver. Undetectable in peripheral blood leukocytes.

It is found in the cytoplasm. Its subcellular location is the cytosol. Its pathway is protein modification; protein ubiquitination. In terms of biological role, substrate-recognition component of a Cul5-RING (CRL5) E3 ubiquitin-protein ligase complex of the DesCEND (destruction via C-end degrons) pathway, which recognizes a C-degron located at the extreme C terminus of target proteins, leading to their ubiquitination and degradation. The C-degron recognized by the DesCEND pathway is usually a motif of less than ten residues and can be present in full-length proteins, truncated proteins or proteolytically cleaved forms. The CRL5(KLHDC1) complex mediates ubiquitination and degradation of truncated SELENOS selenoprotein produced by failed UGA/Sec decoding, which ends with a glycine. The polypeptide is Kelch domain-containing protein 1 (Homo sapiens (Human)).